Consider the following 537-residue polypeptide: Phosphoenolpyruvate carboxykinase (ATP) (537 aa).

Positions 61, 194, and 200 each coordinate substrate. ATP contacts are provided by residues Lys200, His219, and 235-243; that span reads GLSGTGKTT. Residues Lys200 and His219 each coordinate Mn(2+). Position 256 (Asp256) interacts with Mn(2+). The ATP site is built by Glu284, Arg322, and Thr448. Residue Arg322 participates in substrate binding.

The protein belongs to the phosphoenolpyruvate carboxykinase (ATP) family. Mn(2+) serves as cofactor.

The protein localises to the cytoplasm. The catalysed reaction is oxaloacetate + ATP = phosphoenolpyruvate + ADP + CO2. It functions in the pathway carbohydrate biosynthesis; gluconeogenesis. Functionally, involved in the gluconeogenesis. Catalyzes the conversion of oxaloacetate (OAA) to phosphoenolpyruvate (PEP) through direct phosphoryl transfer between the nucleoside triphosphate and OAA. This chain is Phosphoenolpyruvate carboxykinase (ATP), found in Bradyrhizobium sp. (strain ORS 278).